We begin with the raw amino-acid sequence, 877 residues long: MCDLRRPAAGGMMDLAYVCEWEKWSKSTHCPSVPLACAWSCRNLIAFTMDLRSDDQDLTRMIHILDTEHPWDLHSIPSEHHEAITCLEWDQSGSRLLSADADGQIKCWSMADHLANSWESSVGSLVEGDPIVALSWLHNGVKLALHVEKSGASSFGEKFSRVKFSPSLTLFGGKPMEGWIAVTVSGLVTVSLLKPSGQVLTSTESLCRLRGRVALADIAFTGGGNIVVATADGSSASPVQFYKVCVSVVSEKCRIDTEILPSLFMRCTTDLNRKDKFPAITHLKFLARDMSEQVLLCASSQTSSIVECWSLRKEGLPVNNIFQQISPVVGDKQPTILKWRILSATNDLDRVSAVALPKLPISLTNTDLKVASDTQFYPGLGLALAFHDGSVHIVHRLSLQTMAVFYSSAAPRPVDEPAMKRPRTAGPAVHLKAMQLSWTSLALVGIDSHGKLSVLRLSPSMGHPLEVGLALRHLLFLLEYCMVTGYDWWDILLHVQPSMVQSLVEKLHEEYTRQTAALQQVLSTRILAMKASLCKLSPCTVTRVCDYHTKLFLIAISSTLKSLLRPHFLNTPDKSPGDRLTEICTKITDVDIDKVMINLKTEEFVLDMNTLQALQQLLQWVGDFVLYLLASLPNQGSLLRPGHSFLRDGTSLGMLRELMVVIRIWGLLKPSCLPVYTATSDTQDSMSLLFRLLTKLWICCRDEGPASEPDEALVDECCLLPSQLLIPSLDWLPASDGLVSRLQPKQPLRLQFGRAPTLPGSAATLQLDGLARAPGQPKIDHLRRLHLGACPTEECKACTRCGCVTMLKSPNRTTAVKQWEQRWIKNCLAVEGRGPDACVTSRASEEAPAFVQLGPQSTHHSPRTPRSLDHLHPEDRP.

9 WD repeats span residues 21–71, 72–119, 120–165, 166–203, 204–257, 258–334, 335–415, 416–460, and 461–495; these read WEKW…EHPW, DLHS…NSWE, SSVG…VKFS, PSLT…LTST, ESLC…RIDT, EILP…DKQP, TILK…RPVD, EPAM…LSPS, and MGHP…LLHV. The disordered stretch occupies residues 848 to 877; the sequence is PAFVQLGPQSTHHSPRTPRSLDHLHPEDRP. Over residues 866 to 877 the composition is skewed to basic and acidic residues; sequence RSLDHLHPEDRP.

This sequence belongs to the Mediator complex subunit 16 family. In terms of assembly, component of the Mediator complex, which is composed of MED1, MED4, MED6, MED7, MED8, MED9, MED10, MED11, MED12, MED13, MED13L, MED14, MED15, MED16, MED17, MED18, MED19, MED20, MED21, MED22, MED23, MED24, MED25, MED26, MED27, MED29, MED30, MED31, CCNC, CDK8 and CDC2L6/CDK11. The MED12, MED13, CCNC and CDK8 subunits form a distinct module termed the CDK8 module. Mediator containing the CDK8 module is less active than Mediator lacking this module in supporting transcriptional activation. Individual preparations of the Mediator complex lacking one or more distinct subunits have been variously termed ARC, CRSP, DRIP, PC2, SMCC and TRAP.

The protein resides in the nucleus. Component of the Mediator complex, a coactivator involved in the regulated transcription of nearly all RNA polymerase II-dependent genes. Mediator functions as a bridge to convey information from gene-specific regulatory proteins to the basal RNA polymerase II transcription machinery. Mediator is recruited to promoters by direct interactions with regulatory proteins and serves as a scaffold for the assembly of a functional preinitiation complex with RNA polymerase II and the general transcription factors. This chain is Mediator of RNA polymerase II transcription subunit 16 (MED16), found in Homo sapiens (Human).